Consider the following 427-residue polypeptide: Histidinol dehydrogenase (427 aa).

Residues serine 232, glutamine 254, and histidine 257 each contribute to the substrate site. Residues glutamine 254 and histidine 257 each contribute to the Zn(2+) site. Catalysis depends on proton acceptor residues glutamate 322 and histidine 323. Positions 323, 356, 410, and 415 each coordinate substrate. Aspartate 356 is a Zn(2+) binding site. Position 415 (histidine 415) interacts with Zn(2+).

It belongs to the histidinol dehydrogenase family. Requires Zn(2+) as cofactor.

It catalyses the reaction L-histidinol + 2 NAD(+) + H2O = L-histidine + 2 NADH + 3 H(+). The protein operates within amino-acid biosynthesis; L-histidine biosynthesis; L-histidine from 5-phospho-alpha-D-ribose 1-diphosphate: step 9/9. Functionally, catalyzes the sequential NAD-dependent oxidations of L-histidinol to L-histidinaldehyde and then to L-histidine. In Listeria innocua serovar 6a (strain ATCC BAA-680 / CLIP 11262), this protein is Histidinol dehydrogenase.